The chain runs to 380 residues: Cytochrome b (380 aa).

Transmembrane regions (helical) follow at residues 34–54 (FGSL…LLAM), 78–99 (WLIR…FLHI), 114–134 (WNTG…GYVL), and 179–199 (FFAL…THLM). Heme b contacts are provided by His-84 and His-98. Heme b-binding residues include His-183 and His-197. His-202 is a binding site for a ubiquinone. 4 consecutive transmembrane segments (helical) span residues 227-247 (LKDI…ALFS), 289-309 (LGGV…PFLH), 321-341 (LSQT…WVGS), and 348-368 (FIII…ILFP).

Belongs to the cytochrome b family. As to quaternary structure, the cytochrome bc1 complex contains 11 subunits: 3 respiratory subunits (MT-CYB, CYC1 and UQCRFS1), 2 core proteins (UQCRC1 and UQCRC2) and 6 low-molecular weight proteins (UQCRH/QCR6, UQCRB/QCR7, UQCRQ/QCR8, UQCR10/QCR9, UQCR11/QCR10 and a cleavage product of UQCRFS1). This cytochrome bc1 complex then forms a dimer. The cofactor is heme b.

Its subcellular location is the mitochondrion inner membrane. Component of the ubiquinol-cytochrome c reductase complex (complex III or cytochrome b-c1 complex) that is part of the mitochondrial respiratory chain. The b-c1 complex mediates electron transfer from ubiquinol to cytochrome c. Contributes to the generation of a proton gradient across the mitochondrial membrane that is then used for ATP synthesis. The chain is Cytochrome b (MT-CYB) from Tragopan satyra (Satyr tragopan).